We begin with the raw amino-acid sequence, 39 residues long: Photosystem II reaction center protein Y (39 aa).

Residues 4–22 (TLVVFAPIIAALAWVIFNI) traverse the membrane as a helical segment.

The protein belongs to the PsbY family. PSII is composed of 1 copy each of membrane proteins PsbA, PsbB, PsbC, PsbD, PsbE, PsbF, PsbH, PsbI, PsbJ, PsbK, PsbL, PsbM, PsbT, PsbX, PsbY, Psb30/Ycf12, peripheral proteins PsbO, CyanoQ (PsbQ), PsbU, PsbV and a large number of cofactors. It forms dimeric complexes.

Its subcellular location is the cellular thylakoid membrane. In terms of biological role, loosely associated component of the core of photosystem II (PSII), it is not always seen in crystals. PSII is a light-driven water plastoquinone oxidoreductase, using light energy to abstract electrons from H(2)O, generating a proton gradient subsequently used for ATP formation. The sequence is that of Photosystem II reaction center protein Y from Prochlorococcus marinus (strain MIT 9515).